We begin with the raw amino-acid sequence, 501 residues long: E3 ubiquitin-protein ligase TRIM35 (501 aa).

An N-acetylmethionine modification is found at M1. Phosphoserine is present on S8. The RING-type zinc-finger motif lies at 21 to 61 (CAVCYDPFRDAVTLRCGHNFCRRCVSGCWEVQTTPSCPVCK). Residues 96–137 (RSPRPCRAHRAPLTLFCLEDKELLCCACQADARHQEHRVQPI) form a B box-type zinc finger. 4 residues coordinate Zn(2+): C101, H104, C123, and H129. The stretch at 200-252 (VEEQATLDAMKEESRKKHLQAEEKMKQLAEQTEALAREIERLQMEMKEDDMTF) forms a coiled coil. Residues 284–495 (LESLQYRVWK…LRICHLRVSI (212 aa)) form the B30.2/SPRY domain.

The protein belongs to the TRIM/RBCC family. As to quaternary structure, interacts with PKM isoform M2, but not isoform M1; this interaction may compete with that between PKM and FGFR1, and hence reduces FGFR1-dependent tyrosine phosphorylation of PKM. Interacts with IRF7; this interaction promotes IRF7 proteasomal degradation. Interacts with TRAF3; this interaction promotes TRAF3 activation. As to expression, widely expressed. Highly expressed in brain, heart, kidney, spleen, skeletal muscle, lung and thymus. Lower expression found in stomach, large intestine and bone marrow.

The protein resides in the cytoplasm. Its subcellular location is the nucleus. The enzyme catalyses S-ubiquitinyl-[E2 ubiquitin-conjugating enzyme]-L-cysteine + [acceptor protein]-L-lysine = [E2 ubiquitin-conjugating enzyme]-L-cysteine + N(6)-ubiquitinyl-[acceptor protein]-L-lysine.. It participates in protein modification; protein ubiquitination. Functionally, E3 ubiquitin-protein ligase that participates in multiple biological processes including cell death, glucose metabolism, and in particular, the innate immune response. Mediates 'Lys-63'-linked polyubiquitination of TRAF3 thereby promoting type I interferon production via RIG-I signaling pathway. Can also catalyze 'Lys-48'-linked polyubiquitination and proteasomal degradation of viral proteins such as influenza virus PB2. Acts as a negative feedback regulator of TLR7- and TLR9-triggered signaling. Mechanistically, promotes the 'Lys-48'-linked ubiquitination of IRF7 and induces its degradation via a proteasome-dependent pathway. Reduces FGFR1-dependent tyrosine phosphorylation of PKM, inhibiting PKM-dependent lactate production, glucose metabolism, and cell growth. The polypeptide is E3 ubiquitin-protein ligase TRIM35 (Trim35) (Mus musculus (Mouse)).